Consider the following 313-residue polypeptide: Tetraspanning orphan receptor (313 aa).

Residues 1–54 (PQCESETNFHYDIPPGYKDDVLVDVNNMSPSLVSDTQKHERGSHEVKIKHFSPY) lie on the Extracellular side of the membrane. The helical transmembrane segment at 55–75 (IAVCVTTFSLAFCCFMVHAAI) threads the bilayer. Residues 76–82 (TRQPTHL) are Cytoplasmic-facing. A helical transmembrane segment spans residues 83–103 (LPFFFIQVFDLIICLIHILGF). Topologically, residues 104–129 (MSSTSDIRLVIHTKTGPIYIKSTGLT) are extracellular. The helical transmembrane segment at 130-150 (FIILSISCMMLAFKAYCLGMV) threads the bilayer. Topologically, residues 151 to 313 (WDCYKYLMLN…NASSNAHSSC (163 aa)) are cytoplasmic. Disordered regions lie at residues 192–218 (NNSI…YDPA) and 279–313 (NTNT…HSSC). Residues 279-295 (NTNTSTTTSVISPLTTT) show a composition bias toward low complexity. Residues 301 to 313 (QINNASSNAHSSC) show a composition bias toward polar residues.

Interacts (via N-terminal extracellular domain) with human C2a. Phosphorylated on tyrosine residues.

The protein resides in the cell membrane. Cell surface receptor that binds to human complement C2a protein. This results in inhibition of the classical and lectin pathways of complement activation, probably due to interference with binding of C2a to C4b and interference with cleavage by C1 or MASP2 such that C3 convertase cannot be formed. This infers resistance to complement-mediated cell lysis, allowing parasite survival and infection. In Schistosoma haematobium (Blood fluke), this protein is Tetraspanning orphan receptor.